Here is a 314-residue protein sequence, read N- to C-terminus: Methionyl-tRNA formyltransferase (314 aa).

113–116 (SLLP) provides a ligand contact to (6S)-5,6,7,8-tetrahydrofolate.

This sequence belongs to the Fmt family.

The catalysed reaction is L-methionyl-tRNA(fMet) + (6R)-10-formyltetrahydrofolate = N-formyl-L-methionyl-tRNA(fMet) + (6S)-5,6,7,8-tetrahydrofolate + H(+). Attaches a formyl group to the free amino group of methionyl-tRNA(fMet). The formyl group appears to play a dual role in the initiator identity of N-formylmethionyl-tRNA by promoting its recognition by IF2 and preventing the misappropriation of this tRNA by the elongation apparatus. The polypeptide is Methionyl-tRNA formyltransferase (Serratia proteamaculans (strain 568)).